The primary structure comprises 311 residues: Protein nfe2 (311 aa).

Its function is as follows. Responsible for the nodulation efficiency and competitive ability of strain GR4 on alfalfa roots. The chain is Protein nfe2 (nfe2) from Rhizobium meliloti (Ensifer meliloti).